The sequence spans 276 residues: Biotin synthase (276 aa).

A Radical SAM core domain is found at 1–226 (MKKIYLCAIS…EAIIMLAGGR (226 aa)). [4Fe-4S] cluster is bound by residues Cys-17, Cys-21, and Cys-24. [2Fe-2S] cluster is bound by residues Cys-61, Cys-95, and Cys-153.

This sequence belongs to the radical SAM superfamily. Biotin synthase family. As to quaternary structure, homodimer. The cofactor is [4Fe-4S] cluster. [2Fe-2S] cluster is required as a cofactor.

The enzyme catalyses (4R,5S)-dethiobiotin + (sulfur carrier)-SH + 2 reduced [2Fe-2S]-[ferredoxin] + 2 S-adenosyl-L-methionine = (sulfur carrier)-H + biotin + 2 5'-deoxyadenosine + 2 L-methionine + 2 oxidized [2Fe-2S]-[ferredoxin]. It participates in cofactor biosynthesis; biotin biosynthesis; biotin from 7,8-diaminononanoate: step 2/2. Its function is as follows. Catalyzes the conversion of dethiobiotin (DTB) to biotin by the insertion of a sulfur atom into dethiobiotin via a radical-based mechanism. This is Biotin synthase from Nautilia profundicola (strain ATCC BAA-1463 / DSM 18972 / AmH).